Reading from the N-terminus, the 559-residue chain is Beta-glucuronidase (559 aa).

Positions 1 to 19 are cleaved as a signal peptide; it reads MKRILGLIAYASVPTVINA. Residues Asn-53, Asn-91, Asn-99, and Asn-143 are each glycosylated (N-linked (GlcNAc...) asparagine). Glu-194 (proton donor) is an active-site residue. Residues Asn-203, Asn-222, and Asn-280 are each glycosylated (N-linked (GlcNAc...) asparagine). Residue Glu-312 is the Nucleophile of the active site. Asn-427, Asn-440, Asn-465, Asn-491, and Asn-520 each carry an N-linked (GlcNAc...) asparagine glycan.

This sequence belongs to the glycosyl hydrolase 79 family.

The protein localises to the secreted. It catalyses the reaction a beta-D-glucuronoside + H2O = D-glucuronate + an alcohol. In terms of biological role, beta-glucuronidase that hydrolyzes beta-glucuronosyl and 4-O-methyl-beta-glucuronosyl residues of arabinogalactan-protein. Hydrolyzed heparan sulfate only very weakly. Has no activity on xylan from birchwood. Able to catalyze the transglycosylation of glucuronic acid (GlcA) residues from p-nitrophenyl-beta-glucuronic acid (PNP beta-GlcA) to various monosaccharide acceptors such as glucose, galactose and xylose. The protein is Beta-glucuronidase of Neurospora crassa (strain ATCC 24698 / 74-OR23-1A / CBS 708.71 / DSM 1257 / FGSC 987).